We begin with the raw amino-acid sequence, 155 residues long: 6,7-dimethyl-8-ribityllumazine synthase (155 aa).

Residues Trp23, 57–59 (AWE), and 81–83 (CVI) each bind 5-amino-6-(D-ribitylamino)uracil. 86–87 (DT) serves as a coordination point for (2S)-2-hydroxy-3-oxobutyl phosphate. His89 acts as the Proton donor in catalysis. Asn114 is a binding site for 5-amino-6-(D-ribitylamino)uracil. Residue Arg128 coordinates (2S)-2-hydroxy-3-oxobutyl phosphate.

Belongs to the DMRL synthase family. Forms an icosahedral capsid composed of 60 subunits, arranged as a dodecamer of pentamers.

The enzyme catalyses (2S)-2-hydroxy-3-oxobutyl phosphate + 5-amino-6-(D-ribitylamino)uracil = 6,7-dimethyl-8-(1-D-ribityl)lumazine + phosphate + 2 H2O + H(+). It functions in the pathway cofactor biosynthesis; riboflavin biosynthesis; riboflavin from 2-hydroxy-3-oxobutyl phosphate and 5-amino-6-(D-ribitylamino)uracil: step 1/2. Catalyzes the formation of 6,7-dimethyl-8-ribityllumazine by condensation of 5-amino-6-(D-ribitylamino)uracil with 3,4-dihydroxy-2-butanone 4-phosphate. This is the penultimate step in the biosynthesis of riboflavin. This chain is 6,7-dimethyl-8-ribityllumazine synthase, found in Stenotrophomonas maltophilia (strain R551-3).